Here is a 921-residue protein sequence, read N- to C-terminus: Protein translocase subunit SecA (921 aa).

Residues glutamine 87, 105-109, and aspartate 515 each bind ATP; that span reads GEGKT. The segment at 575–594 is disordered; sequence RRIDNQLRGRSGRQGDPGSS. Zn(2+)-binding residues include cysteine 905, cysteine 907, cysteine 916, and cysteine 917.

This sequence belongs to the SecA family. Monomer and homodimer. Part of the essential Sec protein translocation apparatus which comprises SecA, SecYEG and auxiliary proteins SecDF-YajC and YidC. It depends on Zn(2+) as a cofactor.

Its subcellular location is the cell inner membrane. It localises to the cytoplasm. The catalysed reaction is ATP + H2O + cellular proteinSide 1 = ADP + phosphate + cellular proteinSide 2.. Its function is as follows. Part of the Sec protein translocase complex. Interacts with the SecYEG preprotein conducting channel. Has a central role in coupling the hydrolysis of ATP to the transfer of proteins into and across the cell membrane, serving both as a receptor for the preprotein-SecB complex and as an ATP-driven molecular motor driving the stepwise translocation of polypeptide chains across the membrane. This Polynucleobacter necessarius subsp. necessarius (strain STIR1) protein is Protein translocase subunit SecA.